We begin with the raw amino-acid sequence, 422 residues long: G2/mitotic-specific cyclin-A (422 aa).

The segment at 1–29 (MSQPFALHHDGENQMQRRGKMNTRSNGLS) is disordered.

Belongs to the cyclin family. Cyclin AB subfamily.

Functionally, essential for the control of the cell cycle at the G2/M (mitosis) transition. Interacts with the CDC2 and CDK2 protein kinases to form MPF. G2/M cyclins accumulate steadily during G2 and are abruptly destroyed at mitosis. This chain is G2/mitotic-specific cyclin-A, found in Spisula solidissima (Atlantic surf-clam).